The chain runs to 429 residues: Formate-dependent phosphoribosylglycinamide formyltransferase (429 aa).

N(1)-(5-phospho-beta-D-ribosyl)glycinamide is bound by residues 26 to 27 and Glu86; that span reads EL. ATP-binding positions include Arg118, Lys159, 199–202, and Glu207; that span reads EEHI. The ATP-grasp domain occupies 123 to 319; it reads ETLAREAKVP…EFGLHLRAVL (197 aa). Mg(2+) contacts are provided by Glu276 and Glu288. N(1)-(5-phospho-beta-D-ribosyl)glycinamide is bound by residues Asp295, Lys375, and 382 to 383; that span reads RR.

The protein belongs to the PurK/PurT family. In terms of assembly, homodimer.

The enzyme catalyses N(1)-(5-phospho-beta-D-ribosyl)glycinamide + formate + ATP = N(2)-formyl-N(1)-(5-phospho-beta-D-ribosyl)glycinamide + ADP + phosphate + H(+). It functions in the pathway purine metabolism; IMP biosynthesis via de novo pathway; N(2)-formyl-N(1)-(5-phospho-D-ribosyl)glycinamide from N(1)-(5-phospho-D-ribosyl)glycinamide (formate route): step 1/1. In terms of biological role, involved in the de novo purine biosynthesis. Catalyzes the transfer of formate to 5-phospho-ribosyl-glycinamide (GAR), producing 5-phospho-ribosyl-N-formylglycinamide (FGAR). Formate is provided by PurU via hydrolysis of 10-formyl-tetrahydrofolate. The chain is Formate-dependent phosphoribosylglycinamide formyltransferase from Thermococcus kodakarensis (strain ATCC BAA-918 / JCM 12380 / KOD1) (Pyrococcus kodakaraensis (strain KOD1)).